An 88-amino-acid chain; its full sequence is Small ribosomal subunit protein bS20 (88 aa).

The disordered stretch occupies residues 1–27 (MANSKSAKKRALQSEKRRQHNASRRSM).

It belongs to the bacterial ribosomal protein bS20 family.

Functionally, binds directly to 16S ribosomal RNA. The polypeptide is Small ribosomal subunit protein bS20 (Shewanella putrefaciens (strain CN-32 / ATCC BAA-453)).